The following is a 510-amino-acid chain: Serine/threonine-protein kinase UL13 homolog (510 aa).

A disordered region spans residues 1-63; it reads MDADDTPPNL…WANPSTATCM (63 aa). A Protein kinase domain is found at 132 to 458; sequence RDRPRFAGRG…RRIFQCHAVR (327 aa). ATP contacts are provided by residues 138 to 146 and Lys-157; that span reads AGRGTYGRV. Residue Asp-257 is the Proton acceptor of the active site.

This sequence belongs to the protein kinase superfamily. Ser/Thr protein kinase family. In terms of processing, autophosphorylated.

The protein resides in the virion tegument. It localises to the host nucleus. The enzyme catalyses L-seryl-[protein] + ATP = O-phospho-L-seryl-[protein] + ADP + H(+). It carries out the reaction L-threonyl-[protein] + ATP = O-phospho-L-threonyl-[protein] + ADP + H(+). In terms of biological role, multifunctional serine/threonine kinase that plays a role in several processes including egress of virus particles from the nucleus, modulation of the actin cytoskeleton and regulation of viral and cellular gene expression. Regulates the nuclear localization of viral envelopment factor proteins 24 and 27, by phosphorylating the protein kinase ORF66, indicating a role in nuclear egress. Disrupts host nuclear lamins, including LMNA and LMNB1. Phosphorylates the viral Fc receptor composed of glycoproteins E (gE) and I (gI). Phosphorylation of glycoprotein E (gE) by UL13 alters its subcellular localization, from the host early endosome to the plasma membrane. Participates in the transcriptional regulation of cellular and viral mRNAs mainly by phosphorylating the viral transcriptional regulator IE63. The chain is Serine/threonine-protein kinase UL13 homolog from Varicella-zoster virus (strain Dumas) (HHV-3).